Consider the following 86-residue polypeptide: Small ribosomal subunit protein bS20 (86 aa).

The span at 1–11 (MANIKSQKKRV) shows a compositional bias: basic residues. The segment at 1–20 (MANIKSQKKRVRTNEKAHQR) is disordered.

This sequence belongs to the bacterial ribosomal protein bS20 family.

Functionally, binds directly to 16S ribosomal RNA. The protein is Small ribosomal subunit protein bS20 of Bifidobacterium animalis subsp. lactis (strain AD011).